A 497-amino-acid chain; its full sequence is L-arabinose isomerase (497 aa).

4 residues coordinate Mn(2+): Glu306, Glu333, His349, and His448.

This sequence belongs to the arabinose isomerase family. The cofactor is Mn(2+).

The enzyme catalyses beta-L-arabinopyranose = L-ribulose. Its pathway is carbohydrate degradation; L-arabinose degradation via L-ribulose; D-xylulose 5-phosphate from L-arabinose (bacterial route): step 1/3. Functionally, catalyzes the conversion of L-arabinose to L-ribulose. The sequence is that of L-arabinose isomerase from Vibrio parahaemolyticus serotype O3:K6 (strain RIMD 2210633).